The following is a 329-amino-acid chain: Octaprenyl diphosphate synthase (329 aa).

Lys-51, Arg-54, and His-83 together coordinate isopentenyl diphosphate. Residues Asp-90 and Asp-94 each coordinate Mg(2+). Arg-99 contacts an all-trans-polyprenyl diphosphate. Arg-100 contacts isopentenyl diphosphate. 3 residues coordinate an all-trans-polyprenyl diphosphate: Lys-176, Thr-177, and Gln-214.

The protein belongs to the FPP/GGPP synthase family. It depends on Mg(2+) as a cofactor.

The catalysed reaction is 5 isopentenyl diphosphate + (2E,6E)-farnesyl diphosphate = all-trans-octaprenyl diphosphate + 5 diphosphate. In terms of biological role, supplies octaprenyl diphosphate, the precursor for the side chain of the isoprenoid quinones ubiquinone and menaquinone. The sequence is that of Octaprenyl diphosphate synthase (ispB) from Haemophilus influenzae (strain ATCC 51907 / DSM 11121 / KW20 / Rd).